The following is an 87-amino-acid chain: Small ribosomal subunit protein uS15 (87 aa).

Belongs to the universal ribosomal protein uS15 family. Part of the 30S ribosomal subunit. Forms a bridge to the 50S subunit in the 70S ribosome, contacting the 23S rRNA.

Its function is as follows. One of the primary rRNA binding proteins, it binds directly to 16S rRNA where it helps nucleate assembly of the platform of the 30S subunit by binding and bridging several RNA helices of the 16S rRNA. Functionally, forms an intersubunit bridge (bridge B4) with the 23S rRNA of the 50S subunit in the ribosome. This chain is Small ribosomal subunit protein uS15, found in Clostridium botulinum (strain Eklund 17B / Type B).